The following is a 49-amino-acid chain: Large ribosomal subunit protein bL33A (49 aa).

It belongs to the bacterial ribosomal protein bL33 family.

The chain is Large ribosomal subunit protein bL33A from Bacillus pumilus (strain SAFR-032).